The primary structure comprises 119 residues: Acidic phospholipase A2 CM-II (119 aa).

Cystine bridges form between Cys-11/Cys-71, Cys-26/Cys-118, Cys-28/Cys-44, Cys-43/Cys-99, Cys-50/Cys-92, Cys-60/Cys-85, and Cys-78/Cys-90. Positions 27, 29, and 31 each coordinate Ca(2+). His-47 is an active-site residue. Asp-48 contributes to the Ca(2+) binding site. Residue Asp-93 is part of the active site.

The protein belongs to the phospholipase A2 family. Group I subfamily. D49 sub-subfamily. Ca(2+) serves as cofactor. As to expression, expressed by the venom gland.

It localises to the secreted. It catalyses the reaction a 1,2-diacyl-sn-glycero-3-phosphocholine + H2O = a 1-acyl-sn-glycero-3-phosphocholine + a fatty acid + H(+). In terms of biological role, PLA2 catalyzes the calcium-dependent hydrolysis of the 2-acyl groups in 3-sn-phosphoglycerides. This Aspidelaps scutatus (Shield-nose snake) protein is Acidic phospholipase A2 CM-II.